The sequence spans 320 residues: ATP-dependent 6-phosphofructokinase (320 aa).

ATP is bound at residue Gly-12. ADP-binding positions include 22–26 and 55–60; these read RGVVR and RYSVSD. ATP contacts are provided by residues 73–74 and 103–106; these read RF and GDGS. Position 104 (Asp-104) interacts with Mg(2+). Residue 126-128 coordinates substrate; sequence TID. Residue Asp-128 is the Proton acceptor of the active site. Arg-155 provides a ligand contact to ADP. Substrate-binding positions include Arg-163 and 170–172; that span reads MGR. ADP-binding positions include 186 to 188, Lys-212, and 214 to 216; these read GCE and KKH. Substrate contacts are provided by residues Glu-223, Arg-244, and 250 to 253; that span reads HIQR.

This sequence belongs to the phosphofructokinase type A (PFKA) family. ATP-dependent PFK group I subfamily. Prokaryotic clade 'B1' sub-subfamily. In terms of assembly, homotetramer. Mg(2+) serves as cofactor.

Its subcellular location is the cytoplasm. The enzyme catalyses beta-D-fructose 6-phosphate + ATP = beta-D-fructose 1,6-bisphosphate + ADP + H(+). It participates in carbohydrate degradation; glycolysis; D-glyceraldehyde 3-phosphate and glycerone phosphate from D-glucose: step 3/4. Allosterically activated by ADP and other diphosphonucleosides, and allosterically inhibited by phosphoenolpyruvate. Functionally, catalyzes the phosphorylation of D-fructose 6-phosphate to fructose 1,6-bisphosphate by ATP, the first committing step of glycolysis. This is ATP-dependent 6-phosphofructokinase from Pectobacterium carotovorum subsp. carotovorum (strain PC1).